Here is a 244-residue protein sequence, read N- to C-terminus: Probable transcriptional regulatory protein CHY_1525 (244 aa).

Belongs to the TACO1 family.

Its subcellular location is the cytoplasm. This Carboxydothermus hydrogenoformans (strain ATCC BAA-161 / DSM 6008 / Z-2901) protein is Probable transcriptional regulatory protein CHY_1525.